The chain runs to 115 residues: UPF0102 protein NMB2089 (115 aa).

The protein belongs to the UPF0102 family.

This chain is UPF0102 protein NMB2089, found in Neisseria meningitidis serogroup B (strain ATCC BAA-335 / MC58).